A 512-amino-acid polypeptide reads, in one-letter code: Maturase K (512 aa).

Belongs to the intron maturase 2 family. MatK subfamily.

Its subcellular location is the plastid. The protein resides in the chloroplast. Usually encoded in the trnK tRNA gene intron. Probably assists in splicing its own and other chloroplast group II introns. This is Maturase K from Lemna minor (Common duckweed).